Consider the following 100-residue polypeptide: UPF0045 protein MJ1052 (100 aa).

Belongs to the UPF0045 family.

The chain is UPF0045 protein MJ1052 from Methanocaldococcus jannaschii (strain ATCC 43067 / DSM 2661 / JAL-1 / JCM 10045 / NBRC 100440) (Methanococcus jannaschii).